Here is a 958-residue protein sequence, read N- to C-terminus: Transcription factor PfmaH (958 aa).

Positions 44 to 70 form a DNA-binding region, zn(2)-C6 fungal-type; it reads CLNCSQAKTGCNKEVPCQRCQDKGLHC. The disordered stretch occupies residues 272 to 301; sequence EFAGSPSGVSPFGDLSTSNSEPSSSSWGSS. Positions 287-301 are enriched in low complexity; sequence STSNSEPSSSSWGSS.

Its subcellular location is the nucleus. Functionally, transcription factor; part of the gene cluster that mediates the biosynthesis of dihydroxynaphthalene (DHN)-melanin, a bluish-green pigment forming a dark layer in the conidial wall that protects the conidia from UV radiations. The 2 transcription factors present in the cluster, PfmaF and PfmaH, coordinately regulate DHN-melanin production. PfmaH acts as a pathway specific regulator to mediate the expression of Pfma cluster genes including PfmaJ, leading to DHN-melanin production in conidia, and regulates the conidial formation. This chain is Transcription factor PfmaH (PfmaH), found in Pestalotiopsis fici (strain W106-1 / CGMCC3.15140).